The following is a 508-amino-acid chain: Photosystem II CP47 reaction center protein (508 aa).

A run of 6 helical transmembrane segments spans residues 21-36 (AVHLMHTALVSGWAGS), 101-115 (ILLSGALFMAAIWHW), 140-156 (GIHLFLSGLLCFGFGAF), 203-218 (IAAGILGILAGLFHLS), 237-252 (VLSSSIAAVFWAAFVV), and 457-472 (WFALLFFFGHIWHGAR).

This sequence belongs to the PsbB/PsbC family. PsbB subfamily. PSII is composed of 1 copy each of membrane proteins PsbA, PsbB, PsbC, PsbD, PsbE, PsbF, PsbH, PsbI, PsbJ, PsbK, PsbL, PsbM, PsbT, PsbX, PsbY, PsbZ, Psb30/Ycf12, at least 3 peripheral proteins of the oxygen-evolving complex and a large number of cofactors. It forms dimeric complexes. Binds multiple chlorophylls. PSII binds additional chlorophylls, carotenoids and specific lipids. serves as cofactor.

It is found in the plastid. It localises to the chloroplast thylakoid membrane. Functionally, one of the components of the core complex of photosystem II (PSII). It binds chlorophyll and helps catalyze the primary light-induced photochemical processes of PSII. PSII is a light-driven water:plastoquinone oxidoreductase, using light energy to abstract electrons from H(2)O, generating O(2) and a proton gradient subsequently used for ATP formation. This is Photosystem II CP47 reaction center protein from Nephroselmis olivacea (Green alga).